Consider the following 59-residue polypeptide: Small, acid-soluble spore protein H 2 (59 aa).

The protein belongs to the SspH family.

The protein localises to the spore core. This is Small, acid-soluble spore protein H 2 from Geobacillus kaustophilus (strain HTA426).